We begin with the raw amino-acid sequence, 296 residues long: Nucleotide-binding protein SAG0531 (296 aa).

ATP is bound at residue 13 to 20; the sequence is GMSGAGKT. 63–66 is a GTP binding site; sequence DMRS.

It belongs to the RapZ-like family.

Its function is as follows. Displays ATPase and GTPase activities. This Streptococcus agalactiae serotype V (strain ATCC BAA-611 / 2603 V/R) protein is Nucleotide-binding protein SAG0531.